We begin with the raw amino-acid sequence, 278 residues long: Rhomboid protease GlpG (278 aa).

Helical transmembrane passes span 94–114 (AGPL…LMLI), 143–163 (AFLH…WYLG), 175–195 (LLVL…LFSG), 196–216 (ANFG…WLTG), 224–241 (ISLP…LIAG), and 245–267 (ILGL…LMAF). Catalysis depends on Ser202, which acts as the Nucleophile. His255 is a catalytic residue.

This sequence belongs to the peptidase S54 family.

The protein localises to the cell inner membrane. It catalyses the reaction Cleaves type-1 transmembrane domains using a catalytic dyad composed of serine and histidine that are contributed by different transmembrane domains.. Rhomboid-type serine protease that catalyzes intramembrane proteolysis. This chain is Rhomboid protease GlpG, found in Yersinia pseudotuberculosis serotype I (strain IP32953).